Reading from the N-terminus, the 100-residue chain is MAKKSMIQREKKRERLVAKYGKKRDEIKKALKSVTSYKDRLDLYAKLEKLPRNSFPSRLRNRCWLTGRTRGYYRQFGLSRHVLREMAHQCLLPGVVKSSW.

Belongs to the universal ribosomal protein uS14 family. Part of the 30S ribosomal subunit.

It localises to the plastid. The protein localises to the chloroplast. Binds 16S rRNA, required for the assembly of 30S particles. This Rhodomonas salina (Cryptomonas salina) protein is Small ribosomal subunit protein uS14c.